A 182-amino-acid polypeptide reads, in one-letter code: Troponin I, fast skeletal muscle (182 aa).

Gly-2 carries the N-acetylglycine modification. Residues 2–48 (GDEEKRNRAITARRQHLKSVMLQIAATELEKEESRRESEKQNYLSEH) form an involved in binding TNC region. A Phosphothreonine modification is found at Thr-12. Over residues 29–41 (ELEKEESRRESEK) the composition is skewed to basic and acidic residues. The segment at 29-53 (ELEKEESRRESEKQNYLSEHCPPLH) is disordered. The segment at 97-117 (NQKLFDLRGKFKRPPLRRVRM) is involved in binding TNC and actin. At Ser-118 the chain carries Phosphoserine.

Belongs to the troponin I family. Binds to actin and tropomyosin.

Its function is as follows. Troponin I is the inhibitory subunit of troponin, the thin filament regulatory complex which confers calcium-sensitivity to striated muscle actomyosin ATPase activity. In Rattus norvegicus (Rat), this protein is Troponin I, fast skeletal muscle (Tnni2).